Reading from the N-terminus, the 355-residue chain is Phenylalanine--tRNA ligase alpha subunit (355 aa).

E273 is a binding site for Mg(2+).

The protein belongs to the class-II aminoacyl-tRNA synthetase family. Phe-tRNA synthetase alpha subunit type 1 subfamily. As to quaternary structure, tetramer of two alpha and two beta subunits. Mg(2+) is required as a cofactor.

The protein localises to the cytoplasm. It catalyses the reaction tRNA(Phe) + L-phenylalanine + ATP = L-phenylalanyl-tRNA(Phe) + AMP + diphosphate + H(+). The sequence is that of Phenylalanine--tRNA ligase alpha subunit from Bifidobacterium adolescentis (strain ATCC 15703 / DSM 20083 / NCTC 11814 / E194a).